A 322-amino-acid polypeptide reads, in one-letter code: Formimidoylglutamase (322 aa).

Mn(2+)-binding residues include His130, Asp156, His158, Asp160, Cys244, and Asp246.

The protein belongs to the arginase family. Mn(2+) is required as a cofactor.

The catalysed reaction is N-formimidoyl-L-glutamate + H2O = formamide + L-glutamate. The protein operates within amino-acid degradation; L-histidine degradation into L-glutamate; L-glutamate from N-formimidoyl-L-glutamate (hydrolase route): step 1/1. Functionally, catalyzes the conversion of N-formimidoyl-L-glutamate to L-glutamate and formamide. This chain is Formimidoylglutamase, found in Geobacillus thermodenitrificans (strain NG80-2).